The primary structure comprises 1383 residues: DNA-directed RNA polymerase subunit beta'' (1383 aa).

Zn(2+) is bound by residues Cys220, Cys289, Cys296, and Cys299.

This sequence belongs to the RNA polymerase beta' chain family. RpoC2 subfamily. In plastids the minimal PEP RNA polymerase catalytic core is composed of four subunits: alpha, beta, beta', and beta''. When a (nuclear-encoded) sigma factor is associated with the core the holoenzyme is formed, which can initiate transcription. The cofactor is Zn(2+).

The protein localises to the plastid. Its subcellular location is the chloroplast. The enzyme catalyses RNA(n) + a ribonucleoside 5'-triphosphate = RNA(n+1) + diphosphate. DNA-dependent RNA polymerase catalyzes the transcription of DNA into RNA using the four ribonucleoside triphosphates as substrates. This Oenothera argillicola (Appalachian evening primrose) protein is DNA-directed RNA polymerase subunit beta''.